We begin with the raw amino-acid sequence, 98 residues long: Aspartyl/glutamyl-tRNA(Asn/Gln) amidotransferase subunit C (98 aa).

Residues 75–98 (AQALSGAPAQEQQRFKVPQILGED) form a disordered region.

Belongs to the GatC family. Heterotrimer of A, B and C subunits.

It carries out the reaction L-glutamyl-tRNA(Gln) + L-glutamine + ATP + H2O = L-glutaminyl-tRNA(Gln) + L-glutamate + ADP + phosphate + H(+). The catalysed reaction is L-aspartyl-tRNA(Asn) + L-glutamine + ATP + H2O = L-asparaginyl-tRNA(Asn) + L-glutamate + ADP + phosphate + 2 H(+). Its function is as follows. Allows the formation of correctly charged Asn-tRNA(Asn) or Gln-tRNA(Gln) through the transamidation of misacylated Asp-tRNA(Asn) or Glu-tRNA(Gln) in organisms which lack either or both of asparaginyl-tRNA or glutaminyl-tRNA synthetases. The reaction takes place in the presence of glutamine and ATP through an activated phospho-Asp-tRNA(Asn) or phospho-Glu-tRNA(Gln). This chain is Aspartyl/glutamyl-tRNA(Asn/Gln) amidotransferase subunit C, found in Streptomyces griseus subsp. griseus (strain JCM 4626 / CBS 651.72 / NBRC 13350 / KCC S-0626 / ISP 5235).